Here is a 217-residue protein sequence, read N- to C-terminus: GRB2-related adapter protein (217 aa).

The SH3 1 domain maps to 1 to 58; that stretch reads MESVALYSFQATESDELAFNKGDTLKILNMEDDQNWYKAELRGVEGFIPKNYIRVKPH. The 95-residue stretch at 60–154 folds into the SH2 domain; that stretch reads WYSGRISRQL…QIFLRDEEPL (95 aa). Residues 158-217 form the SH3 2 domain; it reads PGACFAQAQFDFSAQDPSQLSFRRGDIIEVLERPDPHWWRGRSCGRVGFFPRSYVQPVHL.

Belongs to the GRB2/sem-5/DRK family. Associates through its SH2 domain with ligand-activated receptors for stem cell factor (KIT) and erythropoietin (EPOR). Also forms a stable complex with the Bcr-Abl oncoprotein. GRAP is associated with the Ras guanine nucleotide exchange factor SOS1, primarily through its N-terminal SH3 domain. Interacts with phosphorylated LAT upon TCR activation. Interacts with SHB.

It is found in the membrane. It localises to the synapse. In terms of biological role, couples signals from receptor and cytoplasmic tyrosine kinases to the Ras signaling pathway. Plays a role in the inner ear and in hearing. This is GRB2-related adapter protein from Homo sapiens (Human).